A 224-amino-acid polypeptide reads, in one-letter code: Lipoprotein-releasing system ATP-binding protein LolD (224 aa).

The region spanning 4–224 is the ABC transporter domain; sequence LSIRNVFKSY…RLAGGEVSEA (221 aa). Residue 40–47 coordinates ATP; sequence GASGAGKS.

Belongs to the ABC transporter superfamily. Lipoprotein translocase (TC 3.A.1.125) family. As to quaternary structure, the complex is composed of two ATP-binding proteins (LolD) and two transmembrane proteins (LolC and LolE).

It localises to the cell inner membrane. Its function is as follows. Part of the ABC transporter complex LolCDE involved in the translocation of mature outer membrane-directed lipoproteins, from the inner membrane to the periplasmic chaperone, LolA. Responsible for the formation of the LolA-lipoprotein complex in an ATP-dependent manner. In Myxococcus xanthus (strain DK1622), this protein is Lipoprotein-releasing system ATP-binding protein LolD.